Here is a 562-residue protein sequence, read N- to C-terminus: Arginine--tRNA ligase (562 aa).

The 'HIGH' region motif lies at 121–131 (PNIAKPFSVGH).

This sequence belongs to the class-I aminoacyl-tRNA synthetase family. In terms of assembly, monomer.

It is found in the cytoplasm. It catalyses the reaction tRNA(Arg) + L-arginine + ATP = L-arginyl-tRNA(Arg) + AMP + diphosphate. This Streptococcus suis (strain 98HAH33) protein is Arginine--tRNA ligase.